We begin with the raw amino-acid sequence, 269 residues long: Formamidopyrimidine-DNA glycosylase (269 aa).

Pro-2 acts as the Schiff-base intermediate with DNA in catalysis. Glu-3 (proton donor) is an active-site residue. Residue Lys-57 is the Proton donor; for beta-elimination activity of the active site. 3 residues coordinate DNA: His-90, Arg-109, and Arg-150. An FPG-type zinc finger spans residues 235-269; it reads QVYGKAGEQCPNCAELIQELKIGQRNTFYCSSCQV. The active-site Proton donor; for delta-elimination activity is Arg-259.

This sequence belongs to the FPG family. Monomer. Zn(2+) serves as cofactor.

The enzyme catalyses Hydrolysis of DNA containing ring-opened 7-methylguanine residues, releasing 2,6-diamino-4-hydroxy-5-(N-methyl)formamidopyrimidine.. It carries out the reaction 2'-deoxyribonucleotide-(2'-deoxyribose 5'-phosphate)-2'-deoxyribonucleotide-DNA = a 3'-end 2'-deoxyribonucleotide-(2,3-dehydro-2,3-deoxyribose 5'-phosphate)-DNA + a 5'-end 5'-phospho-2'-deoxyribonucleoside-DNA + H(+). Its function is as follows. Involved in base excision repair of DNA damaged by oxidation or by mutagenic agents. Acts as a DNA glycosylase that recognizes and removes damaged bases. Has a preference for oxidized purines, such as 7,8-dihydro-8-oxoguanine (8-oxoG). Has AP (apurinic/apyrimidinic) lyase activity and introduces nicks in the DNA strand. Cleaves the DNA backbone by beta-delta elimination to generate a single-strand break at the site of the removed base with both 3'- and 5'-phosphates. The chain is Formamidopyrimidine-DNA glycosylase from Vibrio atlanticus (strain LGP32) (Vibrio splendidus (strain Mel32)).